The sequence spans 545 residues: Chaperonin GroEL (545 aa).

ATP is bound by residues 30–33, Lys51, 87–91, Gly415, 483–485, and Asp499; these read TLGP, DGTTT, and NAA.

The protein belongs to the chaperonin (HSP60) family. Forms a cylinder of 14 subunits composed of two heptameric rings stacked back-to-back. Interacts with the co-chaperonin GroES.

The protein resides in the cytoplasm. It carries out the reaction ATP + H2O + a folded polypeptide = ADP + phosphate + an unfolded polypeptide.. Its function is as follows. Together with its co-chaperonin GroES, plays an essential role in assisting protein folding. The GroEL-GroES system forms a nano-cage that allows encapsulation of the non-native substrate proteins and provides a physical environment optimized to promote and accelerate protein folding. This Aquifex aeolicus (strain VF5) protein is Chaperonin GroEL.